We begin with the raw amino-acid sequence, 367 residues long: 3-dehydroquinate synthase (367 aa).

NAD(+) is bound by residues 69-74, 103-107, 127-128, lysine 140, lysine 149, and 167-170; these read DGEAFK, GVVGD, TT, and TLAT. Glutamate 182, histidine 245, and histidine 262 together coordinate Zn(2+).

This sequence belongs to the sugar phosphate cyclases superfamily. Dehydroquinate synthase family. It depends on Co(2+) as a cofactor. The cofactor is Zn(2+). NAD(+) is required as a cofactor.

The protein localises to the cytoplasm. It catalyses the reaction 7-phospho-2-dehydro-3-deoxy-D-arabino-heptonate = 3-dehydroquinate + phosphate. Its pathway is metabolic intermediate biosynthesis; chorismate biosynthesis; chorismate from D-erythrose 4-phosphate and phosphoenolpyruvate: step 2/7. Its function is as follows. Catalyzes the conversion of 3-deoxy-D-arabino-heptulosonate 7-phosphate (DAHP) to dehydroquinate (DHQ). The sequence is that of 3-dehydroquinate synthase from Azotobacter vinelandii (strain DJ / ATCC BAA-1303).